Reading from the N-terminus, the 445-residue chain is MALPGNFLCCLLVAWLCDPGLGVPLAPAYGAPAVGQFWHVTDLHLDPTYHITDDHTKVCASSKGANVSNPGPFGDVLCDSPYQLILSAFDFIKNSGQEASFMIWTGDSPPHVPVRELSTGSVIEVITNMTVTVQNLFPNLQVFPALGNHDYWPQDQLPIATSKVYSAVSDLWKPWLDEEAISTLRKGGFYSQKVASNPDLRIISLNTNLYYGPNIMTLNKTDPANQFEWLENTLNSSLRNKEKVYVIAHVPVGYLPYATKTPAMRQYYNEKLVDIFRRYSSVIAGQFYGHTHRDSLMVLSDKNGNPINSVFVAPAVTPVKGVLEKETNNPGVRLFQYKPGDYTLLDMLQYYLNLTEANLKGESNWTLEYTLTQAYGVADLQPKSLHGLAQQLATIDSKQFLKYYHYFFVSYDSSAPCDQRCKTLQICAIMNLDLVSYEDCLKRHL.

The signal sequence occupies residues 1–22; sequence MALPGNFLCCLLVAWLCDPGLG. Residues Asp-42 and His-44 each contribute to the Zn(2+) site. Cys-59 and Cys-78 are disulfide-bonded. The N-linked (GlcNAc...) asparagine glycan is linked to Asn-66. A Zn(2+)-binding site is contributed by Asp-107. Residue His-111 participates in ATP binding. Asn-128 is a glycosylation site (N-linked (GlcNAc...) asparagine). Asn-148 is a binding site for Zn(2+). The ATP site is built by Asn-148 and His-149. Residues Asn-219 and Asn-235 are each glycosylated (N-linked (GlcNAc...) asparagine). The Zn(2+) site is built by His-249, His-290, and His-292. N-linked (GlcNAc...) asparagine glycans are attached at residues Asn-353 and Asn-364. 2 cysteine pairs are disulfide-bonded: Cys-417/Cys-421 and Cys-427/Cys-440.

It belongs to the acid sphingomyelinase family. Monomer. Homodimer; homodimerizes following 2',3'-cGAMP-binding. Zn(2+) serves as cofactor.

Its subcellular location is the secreted. It carries out the reaction 2',3'-cGAMP + H2O = 5'-pGpA(2'-5') + H(+). It catalyses the reaction 5'-pGpA(2'-5') + H2O = 5'-GpA(2'-5') + phosphate. The enzyme catalyses a ribonucleoside 5'-triphosphate + H2O = a ribonucleoside 5'-diphosphate + phosphate + H(+). The catalysed reaction is ATP + H2O = ADP + phosphate + H(+). Cyclic-nucleotide phosphodiesterase that acts as a negative regulator of innate immunity by mediating degradation of 2',3'-cGAMP, thereby inhibiting the cGAS-STING signaling. Specifically linearizes 2',3'-cGAMP into 2'5'-bond pGpA and further hydrolyzes pGpA to produce GpA. Also has in vitro nucleotide phosphodiesterase activity with nucleoside triphosphates, such as ATP. Has in vitro activity with p-nitrophenyl-TMP. Has lower activity with nucleoside diphosphates, and no activity with nucleoside monophosphates. Has in vitro activity with CDP-choline, giving rise to CMP and phosphocholine. Has in vitro activity with CDP-ethanolamine. Does not have sphingomyelin phosphodiesterase activity. The chain is Cyclic GMP-AMP phosphodiesterase SMPDL3A (Smpdl3a) from Rattus norvegicus (Rat).